Reading from the N-terminus, the 347-residue chain is NADH-ubiquinone oxidoreductase chain 2 (347 aa).

Transmembrane regions (helical) follow at residues M1–M21, H25–M45, Y59–I79, I96–P116, I122–L142, N150–L170, A201–L221, T242–P262, N274–M294, and L326–L346.

The protein belongs to the complex I subunit 2 family. In terms of assembly, core subunit of respiratory chain NADH dehydrogenase (Complex I) which is composed of 45 different subunits. Interacts with TMEM242.

Its subcellular location is the mitochondrion inner membrane. It carries out the reaction a ubiquinone + NADH + 5 H(+)(in) = a ubiquinol + NAD(+) + 4 H(+)(out). Its function is as follows. Core subunit of the mitochondrial membrane respiratory chain NADH dehydrogenase (Complex I) which catalyzes electron transfer from NADH through the respiratory chain, using ubiquinone as an electron acceptor. Essential for the catalytic activity and assembly of complex I. In Eidolon helvum (Straw-colored fruit bat), this protein is NADH-ubiquinone oxidoreductase chain 2.